We begin with the raw amino-acid sequence, 186 residues long: RNA polymerase sigma factor NccH (186 aa).

The short motif at 49-62 is the Polymerase core binding element; sequence DIVQDTFIAAWHAL. The H-T-H motif DNA-binding region spans 152-171; sequence HPEAAMALGTSAKAVESRVA.

It belongs to the sigma-70 factor family. ECF subfamily.

Its function is as follows. Sigma factors are initiation factors that promote the attachment of RNA polymerase to specific initiation sites and are then released. This sigma factor regulates the genes for a membrane-located efflux system that confers resistance to nickel, cobalt and cadmium. This Alcaligenes xylosoxydans xylosoxydans (Achromobacter xylosoxidans) protein is RNA polymerase sigma factor NccH (nccH).